Reading from the N-terminus, the 214-residue chain is Probable GTP-binding protein EngB (214 aa).

An EngB-type G domain is found at 22-194 (HLPEIAFAGR…WARIDALLEP (173 aa)). GTP contacts are provided by residues 30–37 (GRSNVGKS), 57–61 (GRTQL), 75–78 (DLPG), 142–145 (TKCD), and 173–175 (FSA). Mg(2+)-binding residues include Ser37 and Thr59. Residues 195–214 (TAAETPGIPEEPAPPGPVND) form a disordered region. Positions 203 to 214 (PEEPAPPGPVND) are enriched in pro residues.

It belongs to the TRAFAC class TrmE-Era-EngA-EngB-Septin-like GTPase superfamily. EngB GTPase family. Mg(2+) serves as cofactor.

Its function is as follows. Necessary for normal cell division and for the maintenance of normal septation. The sequence is that of Probable GTP-binding protein EngB from Geobacter sp. (strain M21).